A 167-amino-acid chain; its full sequence is MKFKFNKNGNNNFLAKAKVAIIVGYFYQDIGDKLLSAAQETLAKYGINANNINVFYVPGAFEIPLLAKKLASQKLSNKNLYDGIVALGAIINGETPHFEFVCNECARGVSDVSYQYEIPTAFGILTTNNMEQTIGRAGGYKGNKGEKATMAMIEMLYLMQQVDTQTF.

Residues F26, A60 to E62, and A89 to I91 contribute to the 5-amino-6-(D-ribitylamino)uracil site. Position 94–95 (E94–T95) interacts with (2S)-2-hydroxy-3-oxobutyl phosphate. H97 serves as the catalytic Proton donor. F122 contributes to the 5-amino-6-(D-ribitylamino)uracil binding site. (2S)-2-hydroxy-3-oxobutyl phosphate is bound at residue R136.

The protein belongs to the DMRL synthase family. In terms of assembly, forms an icosahedral capsid composed of 60 subunits, arranged as a dodecamer of pentamers.

The enzyme catalyses (2S)-2-hydroxy-3-oxobutyl phosphate + 5-amino-6-(D-ribitylamino)uracil = 6,7-dimethyl-8-(1-D-ribityl)lumazine + phosphate + 2 H2O + H(+). It functions in the pathway cofactor biosynthesis; riboflavin biosynthesis; riboflavin from 2-hydroxy-3-oxobutyl phosphate and 5-amino-6-(D-ribitylamino)uracil: step 1/2. Functionally, catalyzes the formation of 6,7-dimethyl-8-ribityllumazine by condensation of 5-amino-6-(D-ribitylamino)uracil with 3,4-dihydroxy-2-butanone 4-phosphate. This is the penultimate step in the biosynthesis of riboflavin. The chain is 6,7-dimethyl-8-ribityllumazine synthase from Ruthia magnifica subsp. Calyptogena magnifica.